A 432-amino-acid chain; its full sequence is Glutamyl-tRNA reductase (432 aa).

Substrate is bound by residues threonine 49–arginine 52, serine 109, glutamate 114–glutamine 116, and glutamine 120. The active-site Nucleophile is the cysteine 50. An NADP(+)-binding site is contributed by glycine 198–serine 203.

Belongs to the glutamyl-tRNA reductase family. Homodimer.

It carries out the reaction (S)-4-amino-5-oxopentanoate + tRNA(Glu) + NADP(+) = L-glutamyl-tRNA(Glu) + NADPH + H(+). It participates in porphyrin-containing compound metabolism; protoporphyrin-IX biosynthesis; 5-aminolevulinate from L-glutamyl-tRNA(Glu): step 1/2. The protein operates within porphyrin-containing compound metabolism; chlorophyll biosynthesis. Its function is as follows. Catalyzes the NADPH-dependent reduction of glutamyl-tRNA(Glu) to glutamate 1-semialdehyde (GSA). The chain is Glutamyl-tRNA reductase from Parasynechococcus marenigrum (strain WH8102).